The chain runs to 368 residues: Putative potassium channel KAT5 (368 aa).

3 helical membrane passes run 33-53 (WWHMFLIMLVLYSAWASPFEL), 97-117 (LLNLLRLWRLRCASKLFARVE), and 132-152 (LLCVTLFALHFAACIYLWMVF). An intramembrane region (pore-forming) is located at residues 180–199 (CAVYWSITTLATVGYGDLHA). The helical transmembrane segment at 206 to 226 (LFSIAFMLFNMGLTSYIIGNI) threads the bilayer. Position 225–344 (225–344 (NITNLVVRET…CIVFSNFILV (120 aa))) interacts with a nucleoside 3',5'-cyclic phosphate.

This sequence belongs to the potassium channel family. Plant (TC 1.A.1.4) subfamily.

The protein resides in the membrane. Its function is as follows. Putative inward-rectifying potassium channel. In Oryza sativa subsp. japonica (Rice), this protein is Putative potassium channel KAT5.